Here is an 888-residue protein sequence, read N- to C-terminus: Patched domain-containing protein 1 (888 aa).

A helical transmembrane segment spans residues 20-40; it reads FIASHPVFFASAPVLISILLG. 3 N-linked (GlcNAc...) asparagine glycosylation sites follow: Asn-77, Asn-133, and Asn-167. Residues 268 to 427 form the SSD domain; it reads SERYLVTSLI…LSFYGSSLVF (160 aa). 2 consecutive transmembrane segments (helical) span residues 273 to 293 and 298 to 318; these read VTSL…QDCV and WLGL…AGII. Residues Asn-319 and Asn-326 are each glycosylated (N-linked (GlcNAc...) asparagine). The next 4 membrane-spanning stretches (helical) occupy residues 328 to 348, 373 to 393, 407 to 427, and 502 to 522; these read TFLG…FEML, LSFS…ASPF, CIAI…SLVF, and PFVV…YLQV. N-linked (GlcNAc...) asparagine glycans are attached at residues Asn-568, Asn-599, and Asn-608. A run of 2 helical transmembrane segments spans residues 707–727 and 738–758; these read ALFL…NVWI and VIGF…LCLI. N-linked (GlcNAc...) asparagine glycosylation occurs at Asn-762. The helical transmembrane segment at 795 to 815 threads the bilayer; sequence GVAILQSYLCYIVGLFPLAAV. Asn-818 is a glycosylation site (N-linked (GlcNAc...) asparagine). The chain crosses the membrane as a helical span at residues 826 to 846; sequence CLFLIAFVTFFHCFAILPVIL.

Belongs to the patched family. As to expression, broadly expressed in the brain. Selectively expressed in the thalamic reticular nucleus (TRN) in early development and continues to be enriched in this structure throughout adult life.

The protein localises to the cell membrane. It is found in the cell projection. It localises to the dendritic spine. Functionally, required for the development and function of the thalamic reticular nucleus (TRN), a part of the thalamus that is critical for thalamocortical transmission, generation of sleep rhythms, sensorimotor processing and attention. Can bind cholesterol in vitro. The protein is Patched domain-containing protein 1 of Mus musculus (Mouse).